We begin with the raw amino-acid sequence, 303 residues long: Aspartate carbamoyltransferase catalytic subunit (303 aa).

Residues Arg-51 and Thr-52 each contribute to the carbamoyl phosphate site. Lys-80 is a binding site for L-aspartate. 3 residues coordinate carbamoyl phosphate: Arg-101, His-129, and Gln-132. L-aspartate is bound by residues Arg-162 and Arg-221. Carbamoyl phosphate-binding residues include Leu-260 and Pro-261.

This sequence belongs to the aspartate/ornithine carbamoyltransferase superfamily. ATCase family. As to quaternary structure, heterooligomer of catalytic and regulatory chains.

The catalysed reaction is carbamoyl phosphate + L-aspartate = N-carbamoyl-L-aspartate + phosphate + H(+). It functions in the pathway pyrimidine metabolism; UMP biosynthesis via de novo pathway; (S)-dihydroorotate from bicarbonate: step 2/3. Its function is as follows. Catalyzes the condensation of carbamoyl phosphate and aspartate to form carbamoyl aspartate and inorganic phosphate, the committed step in the de novo pyrimidine nucleotide biosynthesis pathway. This chain is Aspartate carbamoyltransferase catalytic subunit, found in Saccharolobus islandicus (strain M.16.27) (Sulfolobus islandicus).